A 230-amino-acid polypeptide reads, in one-letter code: 7-cyano-7-deazaguanine synthase (230 aa).

7–17 (CSGGLDSVSLA) is a binding site for ATP. Zn(2+)-binding residues include C185, C193, C196, and C199.

The protein belongs to the QueC family. Zn(2+) is required as a cofactor.

It carries out the reaction 7-carboxy-7-deazaguanine + NH4(+) + ATP = 7-cyano-7-deazaguanine + ADP + phosphate + H2O + H(+). The protein operates within purine metabolism; 7-cyano-7-deazaguanine biosynthesis. Its function is as follows. Catalyzes the ATP-dependent conversion of 7-carboxy-7-deazaguanine (CDG) to 7-cyano-7-deazaguanine (preQ(0)). This Ruegeria pomeroyi (strain ATCC 700808 / DSM 15171 / DSS-3) (Silicibacter pomeroyi) protein is 7-cyano-7-deazaguanine synthase.